Consider the following 511-residue polypeptide: 2-isopropylmalate synthase (511 aa).

Residues 6–269 (IIIFDTTLRD…YTDIKCENIF (264 aa)) enclose the Pyruvate carboxyltransferase domain. Residues D15, H203, H205, and N239 each contribute to the Mn(2+) site. The segment at 394 to 511 (VLEKLSVISG…SLKVEERKMA (118 aa)) is regulatory domain.

The protein belongs to the alpha-IPM synthase/homocitrate synthase family. LeuA type 1 subfamily. In terms of assembly, homodimer. It depends on Mn(2+) as a cofactor.

It is found in the cytoplasm. The enzyme catalyses 3-methyl-2-oxobutanoate + acetyl-CoA + H2O = (2S)-2-isopropylmalate + CoA + H(+). It functions in the pathway amino-acid biosynthesis; L-leucine biosynthesis; L-leucine from 3-methyl-2-oxobutanoate: step 1/4. Functionally, catalyzes the condensation of the acetyl group of acetyl-CoA with 3-methyl-2-oxobutanoate (2-ketoisovalerate) to form 3-carboxy-3-hydroxy-4-methylpentanoate (2-isopropylmalate). The protein is 2-isopropylmalate synthase of Campylobacter jejuni subsp. jejuni serotype O:2 (strain ATCC 700819 / NCTC 11168).